Reading from the N-terminus, the 407-residue chain is Venom metalloproteinase 3 (407 aa).

Asparagine 42, asparagine 91, asparagine 126, and asparagine 166 each carry an N-linked (GlcNAc...) asparagine glycan. The 215-residue stretch at 191–405 folds into the Peptidase M12B domain; sequence FYPKLLVLVD…TSAACLKDTY (215 aa). 2 disulfide bridges follow: cysteine 317–cysteine 400 and cysteine 356–cysteine 384. Histidine 340 is a Zn(2+) binding site. Residue glutamate 341 is part of the active site. Zn(2+)-binding residues include histidine 344 and histidine 350. Residue asparagine 391 is glycosylated (N-linked (GlcNAc...) asparagine).

It in the C-terminal section; belongs to the venom metalloproteinase (M12B) family. Monomer. Zn(2+) is required as a cofactor. As to expression, expressed by the venom gland.

It is found in the secreted. With respect to regulation, the gelatinase activity is inhibited by EDTA. In terms of biological role, the recombinant protein has gelatinase activity. In vivo, injection of this recombinant into fifth instar L.oleracea (host) larvae results in partial insect mortality associated with the molt to sixth instar, with surviving insects showing retarded development and growth. The sequence is that of Venom metalloproteinase 3 from Eulophus pennicornis (Parasitoid wasp).